Here is a 318-residue protein sequence, read N- to C-terminus: Ethyl acetate hydrolase (318 aa).

Residues Ser-165, Asp-261, and His-291 contribute to the active site.

It belongs to the 'GDXG' lipolytic enzyme family. Monomer.

It localises to the cytoplasm. The catalysed reaction is ethyl acetate + H2O = ethanol + acetate + H(+). Inhibited by the serine protease inhibitor phenylmethylsulfonyl fluoride, the histidine reagent diethylpyrocarbonate and two sulfhydryl reagents, mercuric chloride and naphthol AS-D chloroacetate. Not inhibited by EDTA. Its function is as follows. Esterase that catalyzes the hydrolysis of ethyl acetate. Can also use propyl acetate and the chromogenic substrates alpha-naphthyl acetate, alpha-naphthyl propionate, alpha-naphthyl caproate and 4-nitrophenyl acetate, with a preference for short-chain aliphatic esters. Highest activity is obtained in vitro with propyl acetate, followed by ethyl acetate. In vivo, could be involved in pyoverdine biosynthesis, but its specific role and its in vivo substrate have not been identified. The protein is Ethyl acetate hydrolase of Pseudomonas putida (Arthrobacter siderocapsulatus).